The primary structure comprises 568 residues: Phosphoprotein (568 aa).

The tract at residues 1 to 25 (MDQDAFFSERDPEAEGETPRKQESL) is disordered. Over residues 7–24 (FSERDPEAEGETPRKQES) the composition is skewed to basic and acidic residues. Positions 33-41 (DVVLSYKPT) are N0 binding. Positions 55 to 322 (DNSKENKPSC…TTANEEGTSN (268 aa)) are disordered. Composition is skewed to basic and acidic residues over residues 56–105 (NSKE…HARI), 132–144 (RNTRIDEDSPNER), 151–167 (PTDEDRKMAENSNKREE), and 175–190 (EEVRRGTPLSDDREGR). Positions 191-216 (TNNNGRSMETSSTHSTRITDVITNPS) are enriched in polar residues. Over residues 239–265 (TRSERTQNSELHKSTSEDSSNLEDHNT) the composition is skewed to basic and acidic residues. Positions 294-304 (YTTNNANNNTK) are enriched in low complexity. A multimerization region spans residues 344–411 (FELSRSASHV…SSRDLHKRFS (68 aa)). Positions 387 to 416 (EENRTLLKQIQEEIDSSRDLHKRFSEYQKE) form a coiled coil. The l protein binding stretch occupies residues 412–445 (EYQKEQNSLMMANLSTLHIITDRGGKTGDPSDTT). Disordered regions lie at residues 434 to 455 (RGGKTGDPSDTTRSPSVFTKGK) and 494 to 513 (VLEEHNNEPQASNASRLIPS). Over residues 441-450 (PSDTTRSPSV) the composition is skewed to polar residues. The interval 479–568 (DLIREDELRD…FEEDIDSLTN (90 aa)) is interaction with the nucleocapsid (N-RNA).

It belongs to the respirovirus P protein family. Homotetramer. Interacts (via multimerization domain) with polymerase L; this interaction forms the polymerase complex. Interacts (via N-terminus) with N0; this interaction allows P to chaperon N0 before encapsidation and form the N-P complex. Interacts (via C-terminus) with N-RNA template; this interaction positions the polymerase on the template.

Functionally, essential cofactor of the RNA polymerase L that plays a central role in the transcription and replication by forming the polymerase complex with RNA polymerase L and recruiting L to the genomic N-RNA template for RNA synthesis. Also plays a central role in the encapsidation of nascent RNA chains by forming the encapsidation complex with the nucleocapsid protein N (N-P complex). Acts as a chaperone for newly synthesized free N protein, so-called N0, allowing encapsidation of nascent RNA chains during replication. The nucleoprotein protein N prevents excessive phosphorylation of P, which leads to down-regulation of viral transcription/ replication. Participates, together with N, in the formation of viral factories (viroplasms), which are large inclusions in the host cytoplasm where replication takes place. Recruits host PI4KB and remodel the host endoplasmic reticulum membrane to form viral replication factories. The protein is Phosphoprotein (P/C) of Human parainfluenza 1 virus (strain CI-5/73) (HPIV-1).